The following is a 485-amino-acid chain: Adenosylhomocysteinase (485 aa).

The substrate site is built by Thr64, Asp139, and Glu205. 206–208 provides a ligand contact to NAD(+); the sequence is TTT. Residues Lys235 and Asp239 each coordinate substrate. Residues Asn240, 269-274, Glu292, Asn327, 348-350, and Asn397 contribute to the NAD(+) site; these read GYGDVG and IGH.

The protein belongs to the adenosylhomocysteinase family. The cofactor is NAD(+).

The catalysed reaction is S-adenosyl-L-homocysteine + H2O = L-homocysteine + adenosine. It functions in the pathway amino-acid biosynthesis; L-homocysteine biosynthesis; L-homocysteine from S-adenosyl-L-homocysteine: step 1/1. Adenosylhomocysteine is a competitive inhibitor of S-adenosyl-L-methionine-dependent methyl transferase reactions; therefore adenosylhomocysteinase may play a key role in the control of methylations via regulation of the intracellular concentration of adenosylhomocysteine. In Lupinus luteus (European yellow lupine), this protein is Adenosylhomocysteinase (SAHH).